A 396-amino-acid chain; its full sequence is 1-deoxy-D-xylulose 5-phosphate reductoisomerase (396 aa).

Positions 10, 11, 12, 13, 36, 37, 38, and 124 each coordinate NADPH. Position 125 (Lys125) interacts with 1-deoxy-D-xylulose 5-phosphate. An NADPH-binding site is contributed by Glu126. Residue Asp150 participates in Mn(2+) binding. 1-deoxy-D-xylulose 5-phosphate is bound by residues Ser151, Glu152, Ser186, and His209. Residue Glu152 participates in Mn(2+) binding. Position 215 (Gly215) interacts with NADPH. 1-deoxy-D-xylulose 5-phosphate-binding residues include Ser222, Asn227, Lys228, and Glu231. Residue Glu231 coordinates Mn(2+).

It belongs to the DXR family. Mg(2+) is required as a cofactor. Requires Mn(2+) as cofactor.

It catalyses the reaction 2-C-methyl-D-erythritol 4-phosphate + NADP(+) = 1-deoxy-D-xylulose 5-phosphate + NADPH + H(+). Its pathway is isoprenoid biosynthesis; isopentenyl diphosphate biosynthesis via DXP pathway; isopentenyl diphosphate from 1-deoxy-D-xylulose 5-phosphate: step 1/6. Its function is as follows. Catalyzes the NADPH-dependent rearrangement and reduction of 1-deoxy-D-xylulose-5-phosphate (DXP) to 2-C-methyl-D-erythritol 4-phosphate (MEP). This chain is 1-deoxy-D-xylulose 5-phosphate reductoisomerase, found in Haemophilus ducreyi (strain 35000HP / ATCC 700724).